The primary structure comprises 508 residues: MFS-type transporter penM (508 aa).

The disordered stretch occupies residues 1–60 (MKDGEETPSVDGSTSASNREKLGTDLEIGPVDLSDGGKEEKVKDPNLVDWDGPDDPENPL). The span at 35–46 (DGGKEEKVKDPN) shows a compositional bias: basic and acidic residues. N-linked (GlcNAc...) asparagine glycosylation occurs at asparagine 61. Residues 73 to 93 (SIALITFLTPLGSSMFAPGVG) traverse the membrane as a helical segment. Asparagine 100 carries an N-linked (GlcNAc...) asparagine glycan. Transmembrane regions (helical) follow at residues 108 to 128 (SFVV…IAPL), 143 to 163 (ILYV…SLVV), 166 to 186 (FFAG…IADM), 197 to 217 (AAWA…GAYL), 225 to 245 (WSFY…LFSI), and 299 to 319 (PIVF…YLLF). Positions 293–307 (KMLFRSPIVFLLSLY) match the Peroxisomal targeting signal motif. Asparagine 331 carries an N-linked (GlcNAc...) asparagine glycan. A run of 5 helical transmembrane segments spans residues 335–355 (GAVG…LFLI), 379–399 (LPPM…YGWT), 407–427 (IVPI…FMCV), 435–457 (FTNY…GALL), and 475–495 (SLLG…WIYG).

The protein belongs to the major facilitator superfamily.

It localises to the peroxisome membrane. Its function is as follows. MFS-type transporter involved in penicillin production, most likely through the translocation of isopenicillin N from the cytosol to the peroxisomal lumen across the peroxisomal membrane. This is MFS-type transporter penM from Penicillium rubens (strain ATCC 28089 / DSM 1075 / NRRL 1951 / Wisconsin 54-1255) (Penicillium chrysogenum).